A 303-amino-acid polypeptide reads, in one-letter code: tRNA pseudouridine synthase B (303 aa).

The active-site Nucleophile is aspartate 47.

The protein belongs to the pseudouridine synthase TruB family. Type 1 subfamily.

The catalysed reaction is uridine(55) in tRNA = pseudouridine(55) in tRNA. Its function is as follows. Responsible for synthesis of pseudouridine from uracil-55 in the psi GC loop of transfer RNAs. The chain is tRNA pseudouridine synthase B from Roseobacter denitrificans (strain ATCC 33942 / OCh 114) (Erythrobacter sp. (strain OCh 114)).